Reading from the N-terminus, the 225-residue chain is Small ribosomal subunit protein uS3 (225 aa).

Residues 38–106 form the KH type-2 domain; sequence IRKFIQSRFS…PVNLNIIEVK (69 aa).

The protein belongs to the universal ribosomal protein uS3 family. In terms of assembly, part of the 30S ribosomal subunit. Forms a tight complex with proteins S10 and S14.

Functionally, binds the lower part of the 30S subunit head. Binds mRNA in the 70S ribosome, positioning it for translation. This is Small ribosomal subunit protein uS3 from Leptospira borgpetersenii serovar Hardjo-bovis (strain JB197).